Here is a 413-residue protein sequence, read N- to C-terminus: Phosphoribosylamine--glycine ligase (413 aa).

Positions 108–310 (KQLMDKYRIP…LMQLIIDLEN (203 aa)) constitute an ATP-grasp domain. Residue 134–190 (VETCDLPIVIKKDGLAAGKGVIIAFTREDALDGVKKIYQEEKGKVVFESYLEGEEFS) coordinates ATP. Positions 280 and 282 each coordinate Mg(2+).

It belongs to the GARS family. Mg(2+) is required as a cofactor. Requires Mn(2+) as cofactor.

It carries out the reaction 5-phospho-beta-D-ribosylamine + glycine + ATP = N(1)-(5-phospho-beta-D-ribosyl)glycinamide + ADP + phosphate + H(+). The protein operates within purine metabolism; IMP biosynthesis via de novo pathway; N(1)-(5-phospho-D-ribosyl)glycinamide from 5-phospho-alpha-D-ribose 1-diphosphate: step 2/2. This chain is Phosphoribosylamine--glycine ligase, found in Staphylococcus epidermidis (strain ATCC 12228 / FDA PCI 1200).